A 370-amino-acid chain; its full sequence is Versatile peroxidase VPS1 (370 aa).

The first 20 residues, 1–20, serve as a signal peptide directing secretion; the sequence is MAFAKLSAFVLALGATVALG. The propeptide occupies 21–31; that stretch reads ESPTHRCLNKR. 4 disulfides stabilise this stretch: Cys34-Cys46, Cys45-Cys315, Cys65-Cys151, and Cys279-Cys344. The Mn(2+) site is built by Glu67 and Glu71. Catalysis depends on His78, which acts as the Proton acceptor. The Ca(2+) site is built by Asp79, Gly97, Asp99, and Ser101. N-linked (GlcNAc...) asparagine glycosylation occurs at Asn133. Trp201 (tryptophan radical intermediate) is an active-site residue. His206 contacts heme b. Position 207 (Thr207) interacts with Ca(2+). 210 to 214 is a binding site for heme b; the sequence is AADHV. Asp212 lines the Mn(2+) pocket. 4 residues coordinate Ca(2+): Asp224, Thr226, Thr229, and Asp231.

Belongs to the peroxidase family. Ligninase subfamily. It depends on heme b as a cofactor. Ca(2+) serves as cofactor.

It is found in the secreted. The enzyme catalyses 1-(4-hydroxy-3-methoxyphenyl)-2-(2-methoxyphenoxy)propane-1,3-diol + H2O2 = guaiacol + vanillin + glycolaldehyde + H2O. It carries out the reaction 2 Mn(2+) + H2O2 + 2 H(+) = 2 Mn(3+) + 2 H2O. A versatile ligninolytic peroxidase that combines the substrate specificity characteristics of the two other ligninolytic peroxidases, manganese peroxidase and lignin peroxidase. In Pleurotus eryngii (Boletus of the steppes), this protein is Versatile peroxidase VPS1 (vps1).